Consider the following 480-residue polypeptide: Chromosomal replication initiator protein DnaA (480 aa).

A domain I, interacts with DnaA modulators region spans residues Met-1–Glu-71. The segment at Glu-71–Ser-137 is domain II. The interval Pro-138–Arg-360 is domain III, AAA+ region. ATP-binding residues include Gly-184, Gly-186, Lys-187, and Thr-188. The interval Ser-361 to Glu-480 is domain IV, binds dsDNA.

This sequence belongs to the DnaA family. In terms of assembly, oligomerizes as a right-handed, spiral filament on DNA at oriC.

It localises to the cytoplasm. In terms of biological role, plays an essential role in the initiation and regulation of chromosomal replication. ATP-DnaA binds to the origin of replication (oriC) to initiate formation of the DNA replication initiation complex once per cell cycle. Binds the DnaA box (a 9 base pair repeat at the origin) and separates the double-stranded (ds)DNA. Forms a right-handed helical filament on oriC DNA; dsDNA binds to the exterior of the filament while single-stranded (ss)DNA is stabiized in the filament's interior. The ATP-DnaA-oriC complex binds and stabilizes one strand of the AT-rich DNA unwinding element (DUE), permitting loading of DNA polymerase. After initiation quickly degrades to an ADP-DnaA complex that is not apt for DNA replication. Binds acidic phospholipids. The polypeptide is Chromosomal replication initiator protein DnaA (Rhizobium meliloti (strain 1021) (Ensifer meliloti)).